Reading from the N-terminus, the 1101-residue chain is Endoglucanase C (1101 aa).

The signal sequence occupies residues 1–32 (MVSRRSSQARGALTAVVATLALALAGSGTALA). CBM-cenC domains follow at residues 64 to 173 (LCVA…TFCL) and 212 to 318 (MCVD…EFCI). Residues 329–880 (PPPGYEPDTG…PDGCAPSACY (552 aa)) form a catalytic region. Aspartate 506 acts as the Nucleophile in catalysis. Histidine 831 is an active-site residue. The tract at residues 838 to 865 (QLDPSLPSPPPGSLAGGPNSQAATWDPT) is disordered. Catalysis depends on residues aspartate 882 and glutamate 891. 2 consecutive Ig-like domains span residues 918 to 1006 (TAPV…LTVE) and 1008 to 1097 (AAPV…LAVQ).

It belongs to the glycosyl hydrolase 9 (cellulase E) family.

The catalysed reaction is Endohydrolysis of (1-&gt;4)-beta-D-glucosidic linkages in cellulose, lichenin and cereal beta-D-glucans.. The biological conversion of cellulose to glucose generally requires three types of hydrolytic enzymes: (1) Endoglucanases which cut internal beta-1,4-glucosidic bonds; (2) Exocellobiohydrolases that cut the disaccharide cellobiose from the non-reducing end of the cellulose polymer chain; (3) Beta-1,4-glucosidases which hydrolyze the cellobiose and other short cello-oligosaccharides to glucose. In Cellulomonas fimi (strain ATCC 484 / DSM 20113 / JCM 1341 / CCUG 24087 / LMG 16345 / NBRC 15513 / NCIMB 8980 / NCTC 7547 / NRS-133), this protein is Endoglucanase C (cenC).